Reading from the N-terminus, the 622-residue chain is Chaperone protein HscA homolog (622 aa).

This sequence belongs to the heat shock protein 70 family.

In terms of biological role, chaperone involved in the maturation of iron-sulfur cluster-containing proteins. Has a low intrinsic ATPase activity which is markedly stimulated by HscB. In Burkholderia ambifaria (strain MC40-6), this protein is Chaperone protein HscA homolog.